A 260-amino-acid chain; its full sequence is Transmembrane protein 70, mitochondrial (260 aa).

A mitochondrion-targeting transit peptide spans 1-81 (MLFLALGSPW…PVYWEGYVRF (81 aa)). Over 82–102 (LNTPSDKSEDGRLIYTGNMAR) the chain is Mitochondrial matrix. A helical transmembrane segment spans residues 103-123 (AVFGVKCFSYSTSLIGLTFLP). Residues 124-141 (YIFTQNNAISESVPLPIQ) lie on the Mitochondrial intermembrane side of the membrane. Residues 142–162 (IIFYGIMGSFTVITPVLLHFI) form a helical membrane-spanning segment. Residues 163 to 260 (TKGYVIRLYH…SEEKRHKDDK (98 aa)) are Mitochondrial matrix-facing.

The protein belongs to the TMEM70 family. In terms of assembly, homooligomer. Interacts (homooligomer form) with ATP5MC1; this interaction facilitates the oligomer formation of subunit c/ATP5MC1 (c-ring) and the c-ring membrane insertion and also protects ATP5MC1 against intramitochondrial proteolysis. Interacts with the core subunits TMEM126B, NDUFAF1, ECSIT and ACAD9 of the MCIA complex. Interacts with ATP5MC3, TMEM242 and TIMMDC1. Lower expressed in the heart than in the liver (at protein level).

The protein localises to the mitochondrion inner membrane. Scaffold protein that participates in the c-ring assembly of mitochondrial ATP synthase (F(1)F(0) ATP synthase or complex V) by facilitating the membrane insertion and oligomer formation of the subunit c/ATP5MC1 through its interaction. Therefore, participates in the early stage of mitochondrial ATP synthase biogenesis and also protects subunit c/ATP5MC1 against intramitochondrial proteolysis. In addition, binds the mitochondrial proton-transporting ATP synthase complexes I and may play a role in the stability of its membrane-bound subassemblies. The polypeptide is Transmembrane protein 70, mitochondrial (Homo sapiens (Human)).